An 869-amino-acid chain; its full sequence is Synaptonemal complex protein ZEP1 (869 aa).

Coiled-coil stretches lie at residues 64-298 (TDLE…SGFT), 330-614 (HEEK…SERY), and 641-713 (RAYH…WKVM). The disordered stretch occupies residues 841–869 (GSHPHPANIGELFSEGSLNPYAEDPYAFG).

Interacts with CRC1. As to expression, highly expressed in panicles.

The protein resides in the nucleus. It localises to the chromosome. Its function is as follows. Required for chromosome synapsis and regulates crossover frequency during meiosis. Acts as a transverse filament protein and constitutes the central element of the synaptonemal complex. This chain is Synaptonemal complex protein ZEP1 (ZEP1), found in Oryza sativa subsp. japonica (Rice).